We begin with the raw amino-acid sequence, 645 residues long: 1-deoxy-D-xylulose-5-phosphate synthase (645 aa).

Thiamine diphosphate is bound by residues H87 and 128-130 (GHS). D159 contacts Mg(2+). Residues 160 to 161 (GA), N188, F295, and E384 each bind thiamine diphosphate. Residue N188 coordinates Mg(2+).

This sequence belongs to the transketolase family. DXPS subfamily. In terms of assembly, homodimer. The cofactor is Mg(2+). Requires thiamine diphosphate as cofactor.

It catalyses the reaction D-glyceraldehyde 3-phosphate + pyruvate + H(+) = 1-deoxy-D-xylulose 5-phosphate + CO2. The protein operates within metabolic intermediate biosynthesis; 1-deoxy-D-xylulose 5-phosphate biosynthesis; 1-deoxy-D-xylulose 5-phosphate from D-glyceraldehyde 3-phosphate and pyruvate: step 1/1. Its function is as follows. Catalyzes the acyloin condensation reaction between C atoms 2 and 3 of pyruvate and glyceraldehyde 3-phosphate to yield 1-deoxy-D-xylulose-5-phosphate (DXP). The sequence is that of 1-deoxy-D-xylulose-5-phosphate synthase from Alcanivorax borkumensis (strain ATCC 700651 / DSM 11573 / NCIMB 13689 / SK2).